Reading from the N-terminus, the 152-residue chain is Ribosome maturation factor RimP (152 aa).

Belongs to the RimP family.

It localises to the cytoplasm. Required for maturation of 30S ribosomal subunits. The protein is Ribosome maturation factor RimP of Burkholderia cenocepacia (strain ATCC BAA-245 / DSM 16553 / LMG 16656 / NCTC 13227 / J2315 / CF5610) (Burkholderia cepacia (strain J2315)).